The primary structure comprises 84 residues: Three-finger toxin 3FTx-1 (84 aa).

An N-terminal signal peptide occupies residues 1 to 21; that stretch reads MKTLLLTLVVVTIVCLDLGNS. 4 disulfide bridges follow: Cys-24–Cys-41, Cys-34–Cys-59, Cys-63–Cys-71, and Cys-72–Cys-77. Asn-78 carries an N-linked (GlcNAc...) asparagine glycan.

This sequence belongs to the three-finger toxin family. Short-chain subfamily. As to expression, expressed by the venom gland.

It is found in the secreted. This is Three-finger toxin 3FTx-1 from Micrurus corallinus (Brazilian coral snake).